The chain runs to 179 residues: Large ribosomal subunit protein uL5 (179 aa).

Belongs to the universal ribosomal protein uL5 family. As to quaternary structure, part of the 50S ribosomal subunit; part of the 5S rRNA/L5/L18/L25 subcomplex. Contacts the 5S rRNA and the P site tRNA. Forms a bridge to the 30S subunit in the 70S ribosome.

Its function is as follows. This is one of the proteins that bind and probably mediate the attachment of the 5S RNA into the large ribosomal subunit, where it forms part of the central protuberance. In the 70S ribosome it contacts protein S13 of the 30S subunit (bridge B1b), connecting the 2 subunits; this bridge is implicated in subunit movement. Contacts the P site tRNA; the 5S rRNA and some of its associated proteins might help stabilize positioning of ribosome-bound tRNAs. This is Large ribosomal subunit protein uL5 from Listeria innocua serovar 6a (strain ATCC BAA-680 / CLIP 11262).